The following is a 94-amino-acid chain: Large ribosomal subunit protein bL27 (94 aa).

A propeptide spanning residues 1 to 9 (MLRLDLQFF) is cleaved from the precursor.

This sequence belongs to the bacterial ribosomal protein bL27 family. Post-translationally, the N-terminus is cleaved by ribosomal processing cysteine protease Prp.

The sequence is that of Large ribosomal subunit protein bL27 from Bacillus velezensis (strain DSM 23117 / BGSC 10A6 / LMG 26770 / FZB42) (Bacillus amyloliquefaciens subsp. plantarum).